A 216-amino-acid chain; its full sequence is Ras-related protein RABA1a (216 aa).

20-27 (GDSGVGKS) contacts GTP. The Effector region signature appears at 42–50 (SKSTIGVEF). GTP is bound by residues 68–72 (DTAGQ), 126–129 (NKCD), and 156–157 (SA). 2 S-geranylgeranyl cysteine lipidation sites follow: Cys213 and Cys214.

Belongs to the small GTPase superfamily. Rab family.

The protein localises to the cell membrane. Functionally, involved in auxin-mediated response. May be involved in vesicle trafficking of components involved in polar auxin transport. Binds GTP and GDP and possesses intrinsic GTPase activity. The protein is Ras-related protein RABA1a (RABA1A) of Arabidopsis thaliana (Mouse-ear cress).